Reading from the N-terminus, the 450-residue chain is L-lysine-epsilon aminotransferase (450 aa).

Gly-127 and Ala-128 together coordinate pyridoxal 5'-phosphate. The 2-oxoglutarate site is built by Arg-168 and Gln-274. Arg-168 contacts L-lysine. Pyridoxal 5'-phosphate is bound at residue Gln-274. At Lys-300 the chain carries N6-(pyridoxal phosphate)lysine. 2-oxoglutarate is bound at residue Arg-423.

This sequence belongs to the class-III pyridoxal-phosphate-dependent aminotransferase family. Pyridoxal 5'-phosphate serves as cofactor.

The catalysed reaction is L-lysine + 2-oxoglutarate = (S)-2-amino-6-oxohexanoate + L-glutamate. Its pathway is antibiotic biosynthesis; cephamycin C biosynthesis. Catalyzes the transfer of the terminal amino group of L-lysine to alpha-ketoglutarate to yield L-glutamate and 2-aminoadipate 6-semialdehyde ((S)-2-amino-6-oxohexanoate), which is spontaneously converted to the dehydrated form 1-piperideine 6-carboxylate. This chain is L-lysine-epsilon aminotransferase, found in Amycolatopsis lactamdurans (Nocardia lactamdurans).